We begin with the raw amino-acid sequence, 227 residues long: Enolase-phosphatase E1 (227 aa).

It belongs to the HAD-like hydrolase superfamily. MasA/MtnC family. Monomer. The cofactor is Mg(2+).

The catalysed reaction is 5-methylsulfanyl-2,3-dioxopentyl phosphate + H2O = 1,2-dihydroxy-5-(methylsulfanyl)pent-1-en-3-one + phosphate. The protein operates within amino-acid biosynthesis; L-methionine biosynthesis via salvage pathway; L-methionine from S-methyl-5-thio-alpha-D-ribose 1-phosphate: step 3/6. It functions in the pathway amino-acid biosynthesis; L-methionine biosynthesis via salvage pathway; L-methionine from S-methyl-5-thio-alpha-D-ribose 1-phosphate: step 4/6. Its function is as follows. Bifunctional enzyme that catalyzes the enolization of 2,3-diketo-5-methylthiopentyl-1-phosphate (DK-MTP-1-P) into the intermediate 2-hydroxy-3-keto-5-methylthiopentenyl-1-phosphate (HK-MTPenyl-1-P), which is then dephosphorylated to form the acireductone 1,2-dihydroxy-3-keto-5-methylthiopentene (DHK-MTPene). The protein is Enolase-phosphatase E1 of Methylococcus capsulatus (strain ATCC 33009 / NCIMB 11132 / Bath).